The following is a 622-amino-acid chain: MRKLYCVLLLSAFEFTYMINFGRGQNYWEHPYQKSDVYHPINEHREHSKEYEYPLHQEHTYQQEDSGEDENTLQHAYPIDHEGAEPAPQEQNLFSSIEIVERSNYMGNPWTEYMAKYDIKEVHGSGIRVDLGEDAEVAGTQYRLPSGKCPVFGKGIIIENSNTTFLKPVATGNQDLKDGGFAFPPTNPLISPMTLDHMRDFYKNNEYVKNLDELTLCSRHAGNMNPDNDKNSNYKYPAVYDYNDKKCHILYIAAQENNGPRYCNKDESKRNSMFCFRPAKDKSFQNYTYLSKNVVDNWEKVCPRKNLENAKFGLWVDGNCEDIPHVNEFSANDLFECNKLVFELSASDQPKQYEQHLTDYEKIKEGFKNKNASMIKSAFLPTGAFKADRYKSRGKGYNWGNYNRKTQKCEIFNVKPTCLINNSSYIATTALSHPNEVEHNFPCSLYKDEIKKEIERESKRIKLNDNDDEGNKKIIAPRIFISDDIDSLKCPCDPEIVSNSTCNFFVCKCVEKRAEVTSNNEVVVKEEYKDEYADIPEHKPTYDKMKIIIASSAAVAVLATILMVYLYKRKGNAEKYDKMDEPQDYGKSNSRNDEMLDPEASFWGEEKRASHTTPVLMEKPYY.

Residues 1-24 (MRKLYCVLLLSAFEFTYMINFGRG) form the signal peptide. The Extracellular portion of the chain corresponds to 25–546 (QNYWEHPYQK…EHKPTYDKMK (522 aa)). Cystine bridges form between Cys-149-Cys-302, Cys-217-Cys-247, Cys-263-Cys-275, Cys-320-Cys-418, and Cys-337-Cys-409. Residue Asn-162 is glycosylated (N-linked (GlcNAc...) asparagine). Residues Asn-286, Asn-371, Asn-421, Asn-422, and Asn-499 are each glycosylated (N-linked (GlcNAc...) asparagine). 3 disulfide bridges follow: Cys-443/Cys-502, Cys-490/Cys-507, and Cys-492/Cys-509. Residues 547 to 567 (IIIASSAAVAVLATILMVYLY) traverse the membrane as a helical segment. Residues 568 to 622 (KRKGNAEKYDKMDEPQDYGKSNSRNDEMLDPEASFWGEEKRASHTTPVLMEKPYY) are Cytoplasmic-facing. A disordered region spans residues 577–607 (DKMDEPQDYGKSNSRNDEMLDPEASFWGEEK).

The protein belongs to the apicomplexan parasites AMA1 family.

The protein resides in the membrane. Its function is as follows. Involved in parasite invasion of erythrocytes. The sequence is that of Apical membrane antigen 1 (AMA-1) from Plasmodium falciparum (isolate 7G8).